The following is a 2947-amino-acid chain: 3'-5' exoribonuclease HELZ2 (2947 aa).

The C3H1-type 1 zinc finger occupies 85–114 (PMRYQVCHYYRPGLGCRRHWNRCTFARSPE). The segment at 167–187 (CFTCCPPCLCPVDPRGHCPKH) adopts a C2H2-type zinc-finger fold. Residues 221 to 245 (YCMYVGRGVPCRHGASRCEYAHSAV) form a C3H1-type 2 zinc finger. Residues 289–311 (CHACLVTCNSQEAFENHCSSLEH) form a C2H2-type; atypical zinc finger. One can recognise a UvrD-like helicase ATP-binding domain in the interval 769–1317 (VGLIAGRRPE…ELLDESQQVT (549 aa)). Position 790-797 (790-797 (GPFGTGKT)) interacts with ATP. The interaction with THRAP3 stretch occupies residues 809-1290 (QQPHTKVLIC…GGMSEEDSES (482 aa)). The DEAA box motif lies at 913–916 (DEAA). Positions 1260–1292 (EDTASGNSASRDAAAEVSTLEGGMSEEDSESDF) are disordered. Short sequence motifs (LXXLL motif) lie at residues 1306–1310 (LKELL), 1348–1352 (LWKFL), 1403–1407 (LVQIL), and 2240–2244 (LEGLP). Arginine 2381 bears the Omega-N-methylarginine mark. The tract at residues 2413-2947 (PEPCRGNWPR…RVQRKSALSS (535 aa)) is interaction with THRAP3. One can recognise a UvrD-like helicase ATP-binding 2 domain in the interval 2449–2726 (LNQSQDRAVR…IMLDTQYRMH (278 aa)). 2470–2477 (GPPGTGKT) contributes to the ATP binding site. Residues 2525–2529 (LGGLL) carry the LXXLL motif 5 motif.

It belongs to the DNA2/NAM7 helicase family. Interacts with PPARA (via DNA-binding domain) and PPARG; the interaction stimulates the transcriptional activity of PPARA and PPARG. Interacts with THRAP3; the interaction is direct and HELZ2 and THRAP3 synergistically enhance the transcriptional activity of PPARG. It is probably part of the peroxisome proliferator activated receptor alpha interacting complex (PRIC).

It is found in the cytoplasm. It carries out the reaction Exonucleolytic cleavage in the 3'- to 5'-direction to yield nucleoside 5'-phosphates.. The catalysed reaction is ATP + H2O = ADP + phosphate + H(+). Can degrade highly structured RNAs through its concerted ATP-dependent RNA helicase and 3' to 5' exoribonuclease activities. Shows a strong preference for pyrimidine over purine residues for its nuclease activity. Acts as a transcriptional coactivator for a number of nuclear receptors including PPARA, PPARG, THRA, THRB and RXRA. The sequence is that of 3'-5' exoribonuclease HELZ2 (Helz2) from Mus musculus (Mouse).